We begin with the raw amino-acid sequence, 322 residues long: Triosephosphate isomerase, chloroplastic (322 aa).

The N-terminal 67 residues, 1 to 67 (MAVVSTSLAS…RRCPRGVVAM (67 aa)), are a transit peptide targeting the chloroplast. Substrate is bound by residues Asn-78 and Lys-80. Catalysis depends on His-162, which acts as the Electrophile. Glu-232 acts as the Proton acceptor in catalysis.

This sequence belongs to the triosephosphate isomerase family. As to quaternary structure, homodimer.

The protein localises to the plastid. It is found in the chloroplast. It catalyses the reaction D-glyceraldehyde 3-phosphate = dihydroxyacetone phosphate. Its pathway is carbohydrate biosynthesis; Calvin cycle. In Spinacia oleracea (Spinach), this protein is Triosephosphate isomerase, chloroplastic (TPIP1).